Consider the following 647-residue polypeptide: DNA mismatch repair protein MutL (647 aa).

The interval 346 to 378 (QTVHAPRSAAPRVSERASDEPPAWQPSPTSGEP) is disordered.

It belongs to the DNA mismatch repair MutL/HexB family.

In terms of biological role, this protein is involved in the repair of mismatches in DNA. It is required for dam-dependent methyl-directed DNA mismatch repair. May act as a 'molecular matchmaker', a protein that promotes the formation of a stable complex between two or more DNA-binding proteins in an ATP-dependent manner without itself being part of a final effector complex. The polypeptide is DNA mismatch repair protein MutL (Limosilactobacillus fermentum (strain NBRC 3956 / LMG 18251) (Lactobacillus fermentum)).